Here is a 182-residue protein sequence, read N- to C-terminus: MSMKGKETMSNEKIVVGKFGATYGIRGWLKVFSYTDNAESIFDYSPWYINQKGKWVEYKVESWKRHNKGMVAKLEGMDVREDAHLMTNFEIAIDPAVLPELSEDEFYWRELFGMHVVTTKGYDLGVVTDMLETGSNDVLVVKANLKDAFGQKERLIPFLEEQVIIKVDREAQRIEVDWDPGF.

In terms of domain architecture, PRC barrel spans 103–182; the sequence is EDEFYWRELF…RIEVDWDPGF (80 aa).

This sequence belongs to the RimM family. Binds ribosomal protein uS19.

The protein resides in the cytoplasm. Functionally, an accessory protein needed during the final step in the assembly of 30S ribosomal subunit, possibly for assembly of the head region. Essential for efficient processing of 16S rRNA. May be needed both before and after RbfA during the maturation of 16S rRNA. It has affinity for free ribosomal 30S subunits but not for 70S ribosomes. This is Ribosome maturation factor RimM from Vibrio parahaemolyticus serotype O3:K6 (strain RIMD 2210633).